Reading from the N-terminus, the 360-residue chain is Phospho-N-acetylmuramoyl-pentapeptide-transferase (360 aa).

Transmembrane regions (helical) follow at residues 18-38, 72-92, 94-114, 132-152, 168-188, 199-219, 236-256, 263-283, 288-308, and 338-358; these read VFSY…FLSL, PTMG…MWAY, SNPY…VGFV, WKYF…YAVG, IMPQ…VGTS, GLAI…AWAT, AGEL…FLWF, VFMG…IAVL, FLLL…ILQV, and VIVR…ATLK.

The protein belongs to the glycosyltransferase 4 family. MraY subfamily. Mg(2+) is required as a cofactor.

It is found in the cell inner membrane. It catalyses the reaction UDP-N-acetyl-alpha-D-muramoyl-L-alanyl-gamma-D-glutamyl-meso-2,6-diaminopimeloyl-D-alanyl-D-alanine + di-trans,octa-cis-undecaprenyl phosphate = di-trans,octa-cis-undecaprenyl diphospho-N-acetyl-alpha-D-muramoyl-L-alanyl-D-glutamyl-meso-2,6-diaminopimeloyl-D-alanyl-D-alanine + UMP. It functions in the pathway cell wall biogenesis; peptidoglycan biosynthesis. Its function is as follows. Catalyzes the initial step of the lipid cycle reactions in the biosynthesis of the cell wall peptidoglycan: transfers peptidoglycan precursor phospho-MurNAc-pentapeptide from UDP-MurNAc-pentapeptide onto the lipid carrier undecaprenyl phosphate, yielding undecaprenyl-pyrophosphoryl-MurNAc-pentapeptide, known as lipid I. The chain is Phospho-N-acetylmuramoyl-pentapeptide-transferase from Serratia proteamaculans (strain 568).